A 139-amino-acid polypeptide reads, in one-letter code: Histone H2B (139 aa).

Low complexity predominate over residues 1 to 37 (MAPKSVASKAPASQASKAPAAASKAPAKAAKTSAAPK). Residues 1–48 (MAPKSVASKAPASQASKAPAAASKAPAKAAKTSAAPKDGAKKRSKKRV) are disordered. At lysine 9 the chain carries N6-acetyllysine; alternate. Lysine 9 participates in a covalent cross-link: Glycyl lysine isopeptide (Lys-Gly) (interchain with G-Cter in SUMO); alternate. Serine 13 bears the Phosphoserine mark. Lysine 17 carries the post-translational modification N6-acetyllysine. A Glycyl lysine isopeptide (Lys-Gly) (interchain with G-Cter in ubiquitin) cross-link involves residue lysine 134.

This sequence belongs to the histone H2B family. The nucleosome is a histone octamer containing two molecules each of H2A, H2B, H3 and H4 assembled in one H3-H4 heterotetramer and two H2A-H2B heterodimers. The octamer wraps approximately 147 bp of DNA. Monoubiquitinated by the UBC2-BRE1 complex to form H2BK123ub1. H2BK123ub1 gives a specific tag for epigenetic transcriptional activation and is also prerequisite for H3K4me and H3K79me formation. H2BK123ub1 also modulates the formation of double-strand breaks during meiosis and is a prerequisite for DNA-damage checkpoint activation. In terms of processing, phosphorylated to form H2BS10ph during progression through meiotic prophase. May be correlated with chromosome condensation. Post-translationally, acetylation of N-terminal lysines and particularly formation of H2BK11ac has a positive effect on transcription. Sumoylation to form H2BK6su occurs preferentially near the telomeres and represses gene transcription.

It localises to the nucleus. The protein resides in the chromosome. Core component of nucleosome. Nucleosomes wrap and compact DNA into chromatin, limiting DNA accessibility to the cellular machineries which require DNA as a template. Histones thereby play a central role in transcription regulation, DNA repair, DNA replication and chromosomal stability. DNA accessibility is regulated via a complex set of post-translational modifications of histones, also called histone code, and nucleosome remodeling. This Cryptococcus neoformans var. neoformans serotype D (strain B-3501A) (Filobasidiella neoformans) protein is Histone H2B (HTB1).